A 180-amino-acid polypeptide reads, in one-letter code: Type-1 fimbrial protein, C chain (180 aa).

Residues 1–23 (MKLKFISMAVFSALTLGVATNAS) form the signal peptide. Cysteines 44 and 84 form a disulfide.

The protein belongs to the fimbrial protein family.

It localises to the fimbrium. Functionally, fimbriae (also called pili), polar filaments radiating from the surface of the bacterium to a length of 0.5-1.5 micrometers and numbering 100-300 per cell, enable bacteria to colonize the epithelium of specific host organs. In Escherichia coli O6:H1 (strain CFT073 / ATCC 700928 / UPEC), this protein is Type-1 fimbrial protein, C chain (pilC).